The chain runs to 236 residues: MNETRINVDPNEIAKFEQLAHRWWDQEGEFKPLHDINPLRLEYIRNHASLAGKRILDVGCGGGILTEELTRLGAKVTGIDLGKAPLSVARLHALEEGLEIDYQQISVERLAETKAGSFDVITNLEMLEHVPYPASVVAACGQLLKPGGKVFFSTLNRTPKAYLFAVIGAEYALRLLPKGTHDYHRFIRPAELETWCRKGGIELQNLTGLHYNPLTQRYRLGKDINVNYLAYGAKKE.

Residues arginine 40, glycine 59, aspartate 80, and leucine 124 each coordinate S-adenosyl-L-methionine.

The protein belongs to the methyltransferase superfamily. UbiG/COQ3 family.

The enzyme catalyses a 3-demethylubiquinol + S-adenosyl-L-methionine = a ubiquinol + S-adenosyl-L-homocysteine + H(+). It carries out the reaction a 3-(all-trans-polyprenyl)benzene-1,2-diol + S-adenosyl-L-methionine = a 2-methoxy-6-(all-trans-polyprenyl)phenol + S-adenosyl-L-homocysteine + H(+). The protein operates within cofactor biosynthesis; ubiquinone biosynthesis. In terms of biological role, O-methyltransferase that catalyzes the 2 O-methylation steps in the ubiquinone biosynthetic pathway. The polypeptide is Ubiquinone biosynthesis O-methyltransferase (Nitrosococcus oceani (strain ATCC 19707 / BCRC 17464 / JCM 30415 / NCIMB 11848 / C-107)).